The sequence spans 58 residues: Ribosome biogenesis protein Nop10 (58 aa).

Belongs to the NOP10 family.

Functionally, involved in ribosome biogenesis; more specifically in 18S rRNA pseudouridylation and in cleavage of pre-rRNA. This chain is Ribosome biogenesis protein Nop10, found in Thermococcus onnurineus (strain NA1).